A 408-amino-acid polypeptide reads, in one-letter code: MAFSCFDKFSYTYCYQCMHGPDGCMVPSRNGEGTELYAHSEELEAKLRELARRGHMEIEKELALEKKTYGSHIKILILGGPLSGKSTIFKQMQIIHVDGFKTDQELIQYRGLIDNNIRDIYLQLIAGSRVVGIPLDPIEHITYEIDEIYAPMSDAFSVRTISELLEPLTEFWNSKQIQEIYKRRCEFELLDSTKYYLENLTRIADPTYLPNQEDIVHSRKATMSINSIVFEYTGVSLLMIDVGGQRSERKKWLHLFDDAKVVLFVIDLTGYAKRSEESRMELSRFPKFFRDVGSNAYDMKVALKIFNEVAAASALANAVFLLFFNKVDLFKEILSQVNLQPCFSKFDGENTYEETSKYICEKFIRAASSKKSVFPHFTTATNTENVKLVFRACMESVFKANAKATGLS.

GTP-binding positions include 39-46 (HSEELEAK), 79-86 (GGPLSGKS), 201-205 (TRIAD), 216-222 (VHSRKAT), 241-245 (DVGGQ), 285-288 (FPKF), 325-328 (NKVD), and A380. Residues 71-408 (SHIKILILGG…KANAKATGLS (338 aa)) enclose the G-alpha domain. Positions 74 to 87 (KILILGGPLSGKST) are G1 motif. S86 lines the Mg(2+) pocket. Residues 214-222 (DIVHSRKAT) are G2 motif. A Mg(2+)-binding site is contributed by T222. The tract at residues 237-246 (LLMIDVGGQR) is G3 motif. The interval 321–328 (LLFFNKVD) is G4 motif. Residues 378–383 (TTATNT) form a G5 motif region.

Belongs to the G-alpha family. As to quaternary structure, g proteins are composed of 3 units; alpha, beta and gamma. The alpha chain contains the guanine nucleotide binding site. Interacts with the dopamine receptor dop-2 (via C-terminus); the interaction is direct.

In terms of biological role, guanine nucleotide-binding proteins (G proteins) are involved as modulators or transducers in various transmembrane signaling systems. In association with the G-protein coupled dopamine receptor dop-2, modulates two types of learning: touch habituation and chemosensory associative conditioning. In Caenorhabditis elegans, this protein is Guanine nucleotide-binding protein alpha-14 subunit.